The chain runs to 328 residues: Renalase (328 aa).

FAD is bound by residues Ala-13, 32 to 33 (DK), Arg-40, and 56 to 57 (QY). Residues 57–61 (YFTAR) and 96–98 (SPD) each bind substrate. Ile-128 serves as a coordination point for FAD. Residue Thr-185 coordinates substrate. Asp-302 lines the FAD pocket. A substrate-binding site is contributed by Arg-308. Val-309 provides a ligand contact to FAD.

This sequence belongs to the bacterial renalase family. FAD is required as a cofactor.

It catalyses the reaction 1,2-dihydro-beta-NAD + O2 + H(+) = H2O2 + NAD(+). It carries out the reaction 1,2-dihydro-beta-NADP + O2 + H(+) = H2O2 + NADP(+). The catalysed reaction is 1,6-dihydro-beta-NADP + O2 + H(+) = H2O2 + NADP(+). The enzyme catalyses 1,6-dihydro-beta-NAD + O2 + H(+) = H2O2 + NAD(+). Its function is as follows. Catalyzes the oxidation of the 1,2-dihydro- and 1,6-dihydro- isomeric forms of beta-NAD(P) back to beta-NAD(P)+. Has a preference for 1,2-dihydro-beta-NAD as substrate. May serve to protect primary metabolism dehydrogenases from inhibition by the 1,2-dihydro- and 1,6-dihydro-beta-NAD(P) isomers. In Pseudomonas syringae pv. tomato (strain ATCC BAA-871 / DC3000), this protein is Renalase.